Consider the following 81-residue polypeptide: Cytochrome b559 subunit alpha (81 aa).

The chain crosses the membrane as a helical span at residues 21-35 (VIHSITIPMLFIAGW). His-23 is a heme binding site.

The protein belongs to the PsbE/PsbF family. As to quaternary structure, heterodimer of an alpha subunit and a beta subunit. PSII is composed of 1 copy each of membrane proteins PsbA, PsbB, PsbC, PsbD, PsbE, PsbF, PsbH, PsbI, PsbJ, PsbK, PsbL, PsbM, PsbT, PsbX, PsbY, PsbZ, Psb30/Ycf12, peripheral proteins PsbO, CyanoQ (PsbQ), PsbU, PsbV and a large number of cofactors. It forms dimeric complexes. Heme b is required as a cofactor.

The protein localises to the cellular thylakoid membrane. In terms of biological role, this b-type cytochrome is tightly associated with the reaction center of photosystem II (PSII). PSII is a light-driven water:plastoquinone oxidoreductase that uses light energy to abstract electrons from H(2)O, generating O(2) and a proton gradient subsequently used for ATP formation. It consists of a core antenna complex that captures photons, and an electron transfer chain that converts photonic excitation into a charge separation. This Picosynechococcus sp. (strain ATCC 27264 / PCC 7002 / PR-6) (Agmenellum quadruplicatum) protein is Cytochrome b559 subunit alpha.